The following is a 606-amino-acid chain: Transmembrane 9 superfamily member 1 (606 aa).

The first 27 residues, methionine 1–glycine 27, serve as a signal peptide directing secretion. Residue asparagine 178 is glycosylated (N-linked (GlcNAc...) asparagine). The next 4 membrane-spanning stretches (helical) occupy residues leucine 237–leucine 257, valine 310–leucine 330, glycine 339–valine 359, and valine 373–valine 393. An N-linked (GlcNAc...) asparagine glycan is attached at asparagine 401. 4 helical membrane passes run isoleucine 412–isoleucine 432, valine 469–valine 489, glycine 499–leucine 519, and serine 535–alanine 555. Asparagine 559 carries an N-linked (GlcNAc...) asparagine glycan. The helical transmembrane segment at phenylalanine 570–phenylalanine 590 threads the bilayer.

This sequence belongs to the nonaspanin (TM9SF) (TC 9.A.2) family.

It is found in the lysosome membrane. The protein localises to the cytoplasmic vesicle. Its subcellular location is the autophagosome membrane. Functionally, plays an essential role in autophagy. The chain is Transmembrane 9 superfamily member 1 (Tm9sf1) from Mus musculus (Mouse).